Consider the following 71-residue polypeptide: MSDALEARVMELEIRLAHQEDLLQSLNQTMIEQQQRIDSLQLQMEGLRQRLAAVIENPLMDPNQEPPPPHY.

Belongs to the SlyX family.

This Thioalkalivibrio sulfidiphilus (strain HL-EbGR7) protein is Protein SlyX homolog.